The primary structure comprises 249 residues: Diaminopimelate epimerase (249 aa).

Asn11 and Asn60 together coordinate substrate. Residue Cys69 is the Proton donor of the active site. Residues 70–71 (GN), Asn164, and 182–183 (ER) each bind substrate. The active-site Proton acceptor is the Cys192. Residue 193 to 194 (GT) coordinates substrate.

This sequence belongs to the diaminopimelate epimerase family. Homodimer.

The protein localises to the cytoplasm. The enzyme catalyses (2S,6S)-2,6-diaminopimelate = meso-2,6-diaminopimelate. The protein operates within amino-acid biosynthesis; L-lysine biosynthesis via DAP pathway; DL-2,6-diaminopimelate from LL-2,6-diaminopimelate: step 1/1. Catalyzes the stereoinversion of LL-2,6-diaminopimelate (L,L-DAP) to meso-diaminopimelate (meso-DAP), a precursor of L-lysine and an essential component of the bacterial peptidoglycan. The protein is Diaminopimelate epimerase of Campylobacter jejuni (strain RM1221).